Here is a 503-residue protein sequence, read N- to C-terminus: ATP synthase subunit alpha (503 aa).

169-176 lines the ATP pocket; that stretch reads GDRKTGKT.

The protein belongs to the ATPase alpha/beta chains family. F-type ATPases have 2 components, CF(1) - the catalytic core - and CF(0) - the membrane proton channel. CF(1) has five subunits: alpha(3), beta(3), gamma(1), delta(1), epsilon(1). CF(0) has three main subunits: a(1), b(2) and c(9-12). The alpha and beta chains form an alternating ring which encloses part of the gamma chain. CF(1) is attached to CF(0) by a central stalk formed by the gamma and epsilon chains, while a peripheral stalk is formed by the delta and b chains.

The protein resides in the cell membrane. It carries out the reaction ATP + H2O + 4 H(+)(in) = ADP + phosphate + 5 H(+)(out). Functionally, produces ATP from ADP in the presence of a proton gradient across the membrane. The alpha chain is a regulatory subunit. This Lactobacillus delbrueckii subsp. bulgaricus (strain ATCC BAA-365 / Lb-18) protein is ATP synthase subunit alpha.